The sequence spans 457 residues: Adenylosuccinate synthetase isozyme 2 B (457 aa).

GTP contacts are provided by residues 40–46 (GDEGKGK) and 68–70 (GHT). Asp41 serves as the catalytic Proton acceptor. Residues Asp41 and Gly68 each coordinate Mg(2+). Position 41 (Asp41) interacts with substrate. Residues 41–44 (DEGK), 66–69 (NAGH), Thr163, Arg177, Asn256, Thr271, and Arg335 contribute to the IMP site. His69 acts as the Proton donor in catalysis. Residue 331–337 (VTTGRKR) participates in substrate binding. Residues Arg337, 363–365 (KLD), and 445–448 (GVGK) each bind GTP.

It belongs to the adenylosuccinate synthetase family. Homodimer. Mg(2+) is required as a cofactor.

Its subcellular location is the cytoplasm. The protein localises to the mitochondrion. The catalysed reaction is IMP + L-aspartate + GTP = N(6)-(1,2-dicarboxyethyl)-AMP + GDP + phosphate + 2 H(+). It participates in purine metabolism; AMP biosynthesis via de novo pathway; AMP from IMP: step 1/2. Its activity is regulated as follows. Inhibited competitively by AMP and IMP and non-competitively by fructose 1,6-bisphosphate. Plays an important role in the de novo pathway and in the salvage pathway of purine nucleotide biosynthesis. Catalyzes the first committed step in the biosynthesis of AMP from IMP. The sequence is that of Adenylosuccinate synthetase isozyme 2 B (adss2-b) from Xenopus tropicalis (Western clawed frog).